The chain runs to 223 residues: Deoxyribose-phosphate aldolase (223 aa).

The active-site Proton donor/acceptor is aspartate 89. Lysine 152 serves as the catalytic Schiff-base intermediate with acetaldehyde. Lysine 181 functions as the Proton donor/acceptor in the catalytic mechanism.

This sequence belongs to the DeoC/FbaB aldolase family. DeoC type 1 subfamily.

The protein resides in the cytoplasm. It carries out the reaction 2-deoxy-D-ribose 5-phosphate = D-glyceraldehyde 3-phosphate + acetaldehyde. Its pathway is carbohydrate degradation; 2-deoxy-D-ribose 1-phosphate degradation; D-glyceraldehyde 3-phosphate and acetaldehyde from 2-deoxy-alpha-D-ribose 1-phosphate: step 2/2. Its function is as follows. Catalyzes a reversible aldol reaction between acetaldehyde and D-glyceraldehyde 3-phosphate to generate 2-deoxy-D-ribose 5-phosphate. This Listeria monocytogenes serotype 4b (strain CLIP80459) protein is Deoxyribose-phosphate aldolase.